We begin with the raw amino-acid sequence, 417 residues long: Probable lysophospholipase BODYGUARD 4 (417 aa).

The N-terminal stretch at 1 to 49 (MSFPRKFGTAIHAALSFIVFFFLDLLDAILCVVYEFVDEILEENSTGCY) is a signal peptide. Cysteine 50 carries the N-palmitoyl cysteine lipid modification. Positions 150 to 259 (VIFIHGFMGS…PPYFPSSVEG (110 aa)) constitute an AB hydrolase-1 domain. The active site involves histidine 154. Serine 225 serves as the catalytic Nucleophile. Residues aspartate 367 and histidine 395 each act as charge relay system in the active site.

In terms of tissue distribution, expressed in epidermal cells.

The protein resides in the cell membrane. It is found in the secreted. Its subcellular location is the cell wall. Functionally, involved in cuticle development and morphogenesis. This Arabidopsis thaliana (Mouse-ear cress) protein is Probable lysophospholipase BODYGUARD 4.